The chain runs to 392 residues: MSHRKYEAPRHGSLAYLPRKRAARHRGKVKSFPKDDAKKPVHLTAAMGYKAGMTTIVRDLDRPGAKAHKKEVVEAVTIIDTPPMIVVGLVGYIETPRGLRSLTTVWAEHLSDEVKRRFYKNWYKSKKKAFTKYVKKHSDNNGAAITRELERIKKYCTVVRVLAHTQIRKTPLKQKKAHLMEIQINGGSVADKVEFGHGLFEKPVSIDSIFEKDEVIDVIAVTKGHGFTGVTARWGTKKLPRKTHKGLRKVACIGAWHPSHVQWTVARAGQAGYHHRTSVNHKIYRIGKGDAEDSAATEVDVTKKKITPMGGFVRYGEINNDFVMVKGSVPGVKKRVMTLRKSMFVHTSRKALEKVELKWIDTSSEFGHGAFQTPAEKKQFQGTLKKDLAASS.

The protein belongs to the universal ribosomal protein uL3 family. As to quaternary structure, component of the large ribosomal subunit (LSU). Mature N.crassa ribosomes consist of a small (40S) and a large (60S) subunit. The 40S small subunit contains 1 molecule of ribosomal RNA (18S rRNA) and at least 32 different proteins. The large 60S subunit contains 3 rRNA molecules (26S, 5.8S and 5S rRNA) and at least 42 different proteins.

Its subcellular location is the cytoplasm. Component of the ribosome, a large ribonucleoprotein complex responsible for the synthesis of proteins in the cell. The small ribosomal subunit (SSU) binds messenger RNAs (mRNAs) and translates the encoded message by selecting cognate aminoacyl-transfer RNA (tRNA) molecules. The large subunit (LSU) contains the ribosomal catalytic site termed the peptidyl transferase center (PTC), which catalyzes the formation of peptide bonds, thereby polymerizing the amino acids delivered by tRNAs into a polypeptide chain. The nascent polypeptides leave the ribosome through a tunnel in the LSU and interact with protein factors that function in enzymatic processing, targeting, and the membrane insertion of nascent chains at the exit of the ribosomal tunnel. The sequence is that of Large ribosomal subunit protein uL3 (rpl-3) from Neurospora crassa (strain ATCC 24698 / 74-OR23-1A / CBS 708.71 / DSM 1257 / FGSC 987).